The primary structure comprises 335 residues: Beta-ketoacyl-[acyl-carrier-protein] synthase III 2 (335 aa).

Residues Cys116 and His256 contribute to the active site. The tract at residues 257–261 (QANVR) is ACP-binding. Asn286 is a catalytic residue.

This sequence belongs to the thiolase-like superfamily. FabH family. In terms of assembly, homodimer.

It is found in the cytoplasm. It carries out the reaction malonyl-[ACP] + acetyl-CoA + H(+) = 3-oxobutanoyl-[ACP] + CO2 + CoA. Its pathway is lipid metabolism; fatty acid biosynthesis. Functionally, catalyzes the condensation reaction of fatty acid synthesis by the addition to an acyl acceptor of two carbons from malonyl-ACP. Catalyzes the first condensation reaction which initiates fatty acid synthesis and may therefore play a role in governing the total rate of fatty acid production. Possesses both acetoacetyl-ACP synthase and acetyl transacylase activities. Its substrate specificity determines the biosynthesis of branched-chain and/or straight-chain of fatty acids. The chain is Beta-ketoacyl-[acyl-carrier-protein] synthase III 2 from Bacteroides thetaiotaomicron (strain ATCC 29148 / DSM 2079 / JCM 5827 / CCUG 10774 / NCTC 10582 / VPI-5482 / E50).